Consider the following 273-residue polypeptide: ComE operon protein 4 (273 aa).

This sequence belongs to the pyrroline-5-carboxylate reductase family.

In terms of biological role, dispensable for transformability. Not known if it can act as a pyrroline-5-carboxylate reductase. This Bacillus subtilis (strain 168) protein is ComE operon protein 4 (comER).